We begin with the raw amino-acid sequence, 938 residues long: Isoleucine--tRNA ligase (938 aa).

Residues Pro58–His68 carry the 'HIGH' region motif. Glu561 contacts L-isoleucyl-5'-AMP. Residues Lys602 to Ser606 carry the 'KMSKS' region motif. ATP is bound at residue Lys605. The Zn(2+) site is built by Cys901, Cys904, Cys921, and Cys924.

Belongs to the class-I aminoacyl-tRNA synthetase family. IleS type 1 subfamily. Monomer. Requires Zn(2+) as cofactor.

It is found in the cytoplasm. It catalyses the reaction tRNA(Ile) + L-isoleucine + ATP = L-isoleucyl-tRNA(Ile) + AMP + diphosphate. In terms of biological role, catalyzes the attachment of isoleucine to tRNA(Ile). As IleRS can inadvertently accommodate and process structurally similar amino acids such as valine, to avoid such errors it has two additional distinct tRNA(Ile)-dependent editing activities. One activity is designated as 'pretransfer' editing and involves the hydrolysis of activated Val-AMP. The other activity is designated 'posttransfer' editing and involves deacylation of mischarged Val-tRNA(Ile). In Klebsiella pneumoniae (strain 342), this protein is Isoleucine--tRNA ligase.